The sequence spans 330 residues: Inactive serine protease 45 (330 aa).

The signal sequence occupies residues Met1–Leu35. Residues Val45 to Ser291 form the Peptidase S1 domain. Disulfide bonds link Cys75-Cys91, Cys172-Cys249, Cys207-Cys230, and Cys239-Cys267. N-linked (GlcNAc...) asparagine glycosylation occurs at Asn272.

This sequence belongs to the peptidase S1 family.

The protein resides in the secreted. This is Inactive serine protease 45 (Prss45) from Rattus norvegicus (Rat).